The primary structure comprises 227 residues: ATP synthase F(0) complex subunit a (227 aa).

Helical transmembrane passes span 12–32, 69–89, 98–118, 139–159, 170–190, and 196–216; these read PCLLGIPLILPSLLLPALLLP, WALLLTSLILMLLSINLLGLL, QLSMNMALALPLWLATLLTGL, IPALIMIETTSLLIRPLALGV, LLIQLISTATIALLPMMPSIS, and ILFLLTILEVAVAMIQAYVFV.

Belongs to the ATPase A chain family. Component of the ATP synthase complex composed at least of ATP5F1A/subunit alpha, ATP5F1B/subunit beta, ATP5MC1/subunit c (homooctomer), MT-ATP6/subunit a, MT-ATP8/subunit 8, ATP5ME/subunit e, ATP5MF/subunit f, ATP5MG/subunit g, ATP5MK/subunit k, ATP5MJ/subunit j, ATP5F1C/subunit gamma, ATP5F1D/subunit delta, ATP5F1E/subunit epsilon, ATP5PF/subunit F6, ATP5PB/subunit b, ATP5PD/subunit d, ATP5PO/subunit OSCP. ATP synthase complex consists of a soluble F(1) head domain (subunits alpha(3) and beta(3)) - the catalytic core - and a membrane F(0) domain - the membrane proton channel (subunits c, a, 8, e, f, g, k and j). These two domains are linked by a central stalk (subunits gamma, delta, and epsilon) rotating inside the F1 region and a stationary peripheral stalk (subunits F6, b, d, and OSCP). Interacts with DNAJC30; interaction is direct.

It localises to the mitochondrion inner membrane. The enzyme catalyses H(+)(in) = H(+)(out). Subunit a, of the mitochondrial membrane ATP synthase complex (F(1)F(0) ATP synthase or Complex V) that produces ATP from ADP in the presence of a proton gradient across the membrane which is generated by electron transport complexes of the respiratory chain. ATP synthase complex consist of a soluble F(1) head domain - the catalytic core - and a membrane F(1) domain - the membrane proton channel. These two domains are linked by a central stalk rotating inside the F(1) region and a stationary peripheral stalk. During catalysis, ATP synthesis in the catalytic domain of F(1) is coupled via a rotary mechanism of the central stalk subunits to proton translocation. With the subunit c (ATP5MC1), forms the proton-conducting channel in the F(0) domain, that contains two crucial half-channels (inlet and outlet) that facilitate proton movement from the mitochondrial intermembrane space (IMS) into the matrix. Protons are taken up via the inlet half-channel and released through the outlet half-channel, following a Grotthuss mechanism. In Gallus gallus (Chicken), this protein is ATP synthase F(0) complex subunit a.